The following is a 741-amino-acid chain: Exostosin-1b (741 aa).

The Cytoplasmic portion of the chain corresponds to 1–7; it reads MQAKKRY. The chain crosses the membrane as a helical; Signal-anchor for type II membrane protein span at residues 8–28; the sequence is LISLLTGAFLVLLIYLGGGGV. Residues 29–741 are Lumenal-facing; the sequence is PGPAAPGSRS…RKKYREIERL (713 aa). 2 N-linked (GlcNAc...) asparagine glycosylation sites follow: N84 and N325. UDP-N-acetyl-alpha-D-glucosamine is bound by residues R435, R544, D560, E561, D562, E648, D649, and R696. Residue D562 participates in Mn(2+) binding. C647 and C699 are disulfide-bonded. D649 is an active-site residue.

It belongs to the glycosyltransferase 47 family. The cofactor is Mn(2+).

It localises to the endoplasmic reticulum membrane. It catalyses the reaction 3-O-{[(1-&gt;4)-beta-D-GlcA-(1-&gt;4)-alpha-D-GlcNAc](n)-(1-&gt;4)-beta-D-GlcA-(1-&gt;3)-beta-D-Gal-(1-&gt;3)-beta-D-Gal-(1-&gt;4)-beta-D-Xyl}-L-seryl-[protein] + UDP-N-acetyl-alpha-D-glucosamine = 3-O-{alpha-D-GlcNAc-[(1-&gt;4)-beta-D-GlcA-(1-&gt;4)-alpha-D-GlcNAc](n)-(1-&gt;4)-beta-D-GlcA-(1-&gt;3)-beta-D-Gal-(1-&gt;3)-beta-D-Gal-(1-&gt;4)-beta-D-Xyl}-L-seryl-[protein] + UDP + H(+). It carries out the reaction 3-O-{alpha-D-GlcNAc-[(1-&gt;4)-beta-D-GlcA-(1-&gt;4)-alpha-D-GlcNAc](n)-(1-&gt;4)-beta-D-GlcA-(1-&gt;3)-beta-D-Gal-(1-&gt;3)-beta-D-Gal-(1-&gt;4)-beta-D-Xyl}-L-seryl-[protein] + UDP-alpha-D-glucuronate = 3-O-{[(1-&gt;4)-beta-D-GlcA-(1-&gt;4)-alpha-D-GlcNAc](n+1)-(1-&gt;4)-beta-D-GlcA-(1-&gt;3)-beta-D-Gal-(1-&gt;3)-beta-D-Gal-(1-&gt;4)-beta-D-Xyl}-L-seryl-[protein] + UDP + H(+). The protein operates within protein modification; protein glycosylation. Glycosyltransferase required for the biosynthesis of heparan-sulfate. This chain is Exostosin-1b (ext1b), found in Danio rerio (Zebrafish).